The primary structure comprises 240 residues: Uridylate kinase (240 aa).

13–16 contributes to the ATP binding site; the sequence is KASG. Residues 21-26 form an involved in allosteric activation by GTP region; sequence GGQGFG. Position 55 (G55) interacts with UMP. G56 and R60 together coordinate ATP. UMP contacts are provided by residues D75 and 136–143; that span reads TGNPFFTT. ATP-binding residues include T163, Q164, Y169, and D172.

Belongs to the UMP kinase family. As to quaternary structure, homohexamer.

It localises to the cytoplasm. The enzyme catalyses UMP + ATP = UDP + ADP. It functions in the pathway pyrimidine metabolism; CTP biosynthesis via de novo pathway; UDP from UMP (UMPK route): step 1/1. With respect to regulation, allosterically activated by GTP. Inhibited by UTP. Catalyzes the reversible phosphorylation of UMP to UDP. This chain is Uridylate kinase, found in Rhizobium johnstonii (strain DSM 114642 / LMG 32736 / 3841) (Rhizobium leguminosarum bv. viciae).